The following is a 545-amino-acid chain: Chaperonin GroEL (545 aa).

Residues 29-32 (TMGP), Lys-50, 86-90 (DGTTT), Gly-414, 480-482 (NAA), and Asp-496 each bind ATP.

The protein belongs to the chaperonin (HSP60) family. Forms a cylinder of 14 subunits composed of two heptameric rings stacked back-to-back. Interacts with the co-chaperonin GroES.

The protein localises to the cytoplasm. It catalyses the reaction ATP + H2O + a folded polypeptide = ADP + phosphate + an unfolded polypeptide.. Functionally, together with its co-chaperonin GroES, plays an essential role in assisting protein folding. The GroEL-GroES system forms a nano-cage that allows encapsulation of the non-native substrate proteins and provides a physical environment optimized to promote and accelerate protein folding. The chain is Chaperonin GroEL from Malacoplasma penetrans (strain HF-2) (Mycoplasma penetrans).